The following is a 482-amino-acid chain: Putative fatty acid desaturase 2-like protein FADS2B (482 aa).

Positions 1–31 (MKFEEKCGDNGSIVGRNQSYPGEKHQPKGKP) are disordered. Residues 1 to 167 (MKFEEKCGDN…EAMNMFHANL (167 aa)) are Cytoplasmic-facing. The Cytochrome b5 heme-binding domain occupies 56–132 (LSMYTWLEIQ…LKPLLIGELA (77 aa)). Heme-binding residues include histidine 90 and histidine 113. The helical transmembrane segment at 168 to 188 (GFFFLHFVQILILEVLAWLIV) threads the bilayer. The Lumenal segment spans residues 189–190 (YH). A helical membrane pass occupies residues 191–211 (FGSGWPVTMFISFLLTISQAS). The Cytoplasmic portion of the chain corresponds to 212-305 (SSFLQHDAGH…YEEQHLYFYK (94 aa)). The short motif at 217–221 (HDAGH) is the Histidine box-1 element. The Histidine box-2 signature appears at 254–258 (HFEQH). Residues 306 to 326 (VWLPLFMPVYLKLPSMQAMYL) traverse the membrane as a helical segment. The Lumenal segment spans residues 327–343 (QRYWVCFSLQDITWVSS). The helical transmembrane segment at 344–364 (FYIYFITFGLYYGIFGTMLLI) threads the bilayer. Topologically, residues 365–482 (YLVKFLESPW…AALWADAYYE (118 aa)) are cytoplasmic. A Histidine box-3 motif is present at residues 421–425 (QIEHH).

It belongs to the fatty acid desaturase type 1 family.

The protein localises to the endoplasmic reticulum membrane. It functions in the pathway lipid metabolism; polyunsaturated fatty acid biosynthesis. This chain is Putative fatty acid desaturase 2-like protein FADS2B, found in Homo sapiens (Human).